Here is a 115-residue protein sequence, read N- to C-terminus: Replication initiation control protein YabA (115 aa).

Residues His85, Cys87, Cys101, and Cys104 each contribute to the Zn(2+) site.

The protein belongs to the YabA family. In terms of assembly, homotetramer. Interacts with both DnaA and DnaN, acting as a bridge between these two proteins. The cofactor is Zn(2+).

The protein localises to the cytoplasm. It localises to the nucleoid. Involved in control of chromosome replication initiation. Inhibits the cooperative binding of DnaA to the oriC region, thus negatively regulating initiation of chromosome replication. Inhibits the ability of DnaA-ATP to form a helix on DNA; does not disassemble preformed DnaA-DNA helices. Decreases the residence time of DnaA on the chromosome at its binding sites (oriC, replication forks and promoter-binding sites). Tethers DnaA to the replication machinery via the DNA polymerase beta sliding clamp subunit (dnaN). Associates with oriC and other DnaA targets on the chromosome in a DnaA-dependent manner. In Lactiplantibacillus plantarum (strain ATCC BAA-793 / NCIMB 8826 / WCFS1) (Lactobacillus plantarum), this protein is Replication initiation control protein YabA.